The chain runs to 130 residues: Single-stranded DNA-binding protein 1 (130 aa).

The SSB domain occupies 1–104 (MINNVVLIGR…VVAESFQILE (104 aa)). Residues 108-130 (NTANTSSLADSMPDYGPEPDLPF) form a disordered region.

In terms of assembly, homotetramer.

The protein is Single-stranded DNA-binding protein 1 (ssb1) of Streptococcus pyogenes serotype M18 (strain MGAS8232).